A 426-amino-acid polypeptide reads, in one-letter code: Enolase (426 aa).

Glutamine 163 serves as a coordination point for (2R)-2-phosphoglycerate. Glutamate 205 acts as the Proton donor in catalysis. Residues aspartate 242, glutamate 286, and aspartate 313 each contribute to the Mg(2+) site. Residues lysine 338, arginine 367, serine 368, and lysine 389 each contribute to the (2R)-2-phosphoglycerate site. The active-site Proton acceptor is lysine 338.

Belongs to the enolase family. Requires Mg(2+) as cofactor.

It localises to the cytoplasm. The protein localises to the secreted. The protein resides in the cell surface. It carries out the reaction (2R)-2-phosphoglycerate = phosphoenolpyruvate + H2O. It functions in the pathway carbohydrate degradation; glycolysis; pyruvate from D-glyceraldehyde 3-phosphate: step 4/5. Functionally, catalyzes the reversible conversion of 2-phosphoglycerate (2-PG) into phosphoenolpyruvate (PEP). It is essential for the degradation of carbohydrates via glycolysis. In Helicobacter pylori (strain J99 / ATCC 700824) (Campylobacter pylori J99), this protein is Enolase.